Consider the following 860-residue polypeptide: MTDSPDRLIATDLRNEMSQSYLEYAMSVIVGRALPDARDGLKPVHRRILYAMYELGLTPDRPFRKCARVVGEVLGKYHPHGDTAVYDALVRMAQDFSMREPLIDGHGNFGSVDNDPPAAMRYTESRLRPLSTNSLLRDIEAETVDFIDNFDGSQQEPTVLPARIPQLLINGSSGIAVGMATNIPPHNLGEVIDGAIALIRNPEITEQELMQIIPGPDFPTGAQILGRSGIREAYLTGRGSITMRGVASIETMEHPGRPDRDAIIVTELPYQTNKAALIERIADLVNDKKIDGIADIRDESDRDGMRIVIELKRDAYARVVLNNLYKQTPIQSNFGANLLALVNGTPEVLTIKKFLTVFWEFRIETITRRTRYELRKAEERDHLLQGLLIALDNLDAVIRLIRGAADTASAKTELVEGFSLSEVQADAILQMQLRRLTALEADKITAEHDELQTKIADFQDILARRERVNAIIEEELEQIKAIHATPRRTVIVQEDGELIDTDLIANDQALILLTEQGYIKRMPASTFGTQNRATRGKAAAKIKDDDGVEHFLSCCDHDKVLFFSDRGVVYSLNAYQIPIASRTARGVPIVQMLPIPKDEKITSLVSVSEFDDDTYFIMLTKQGYIKKTALSAFSNIRANGLIAISLVEGDQLRWVRLAKAEDSVIIGSQKGMAIHFKADQDELRALGRATRGVKSMRLRSGDALISMDILPSQVVANIAVGSEDEPDEDLGGDTDAILEESDNPGPWLLGVTMKGFGKRVPIGQFRLQHRAGLGVKAIRFKSKDDQLVALHVVNADDELMIVTNRGIIIRQSVNDISPQSRSATGVRVQRLDADDAIAAVALVPPSGEEELAEMSESEES.

Residues 34–503 (LPDARDGLKP…EDGELIDTDL (470 aa)) form the Topo IIA-type catalytic domain. Y122 acts as the O-(5'-phospho-DNA)-tyrosine intermediate in catalysis. The short motif at 530 to 536 (QNRATRG) is the GyrA-box element.

It belongs to the type II topoisomerase GyrA/ParC subunit family. As to quaternary structure, heterotetramer, composed of two GyrA and two GyrB chains. In the heterotetramer, GyrA contains the active site tyrosine that forms a transient covalent intermediate with DNA, while GyrB binds cofactors and catalyzes ATP hydrolysis.

It is found in the cytoplasm. It carries out the reaction ATP-dependent breakage, passage and rejoining of double-stranded DNA.. Functionally, a type II topoisomerase that negatively supercoils closed circular double-stranded (ds) DNA in an ATP-dependent manner to modulate DNA topology and maintain chromosomes in an underwound state. Negative supercoiling favors strand separation, and DNA replication, transcription, recombination and repair, all of which involve strand separation. Also able to catalyze the interconversion of other topological isomers of dsDNA rings, including catenanes and knotted rings. Type II topoisomerases break and join 2 DNA strands simultaneously in an ATP-dependent manner. The chain is DNA gyrase subunit A from Synechocystis sp. (strain ATCC 27184 / PCC 6803 / Kazusa).